We begin with the raw amino-acid sequence, 535 residues long: Alpha-1,3-mannosyl-glycoprotein 4-beta-N-acetylglucosaminyltransferase A (535 aa).

Over Met-1–Gly-6 the chain is Cytoplasmic. Residues Thr-7–Trp-27 traverse the membrane as a helical; Signal-anchor for type II membrane protein segment. Residues Gln-28–Arg-54 are a coiled coil. The Lumenal portion of the chain corresponds to Gln-28–Asn-535. 3 N-linked (GlcNAc...) asparagine glycosylation sites follow: Asn-77, Asn-85, and Asn-458.

The protein belongs to the glycosyltransferase 54 family. The cofactor is a divalent metal cation. In terms of processing, N-glycosylated.

The protein resides in the golgi apparatus membrane. Its subcellular location is the secreted. It catalyses the reaction N(4)-{beta-D-GlcNAc-(1-&gt;2)-alpha-D-Man-(1-&gt;3)-[beta-D-GlcNAc-(1-&gt;2)-alpha-D-Man-(1-&gt;6)]-beta-D-Man-(1-&gt;4)-beta-D-GlcNAc-(1-&gt;4)-beta-D-GlcNAc}-L-asparaginyl-[protein] + UDP-N-acetyl-alpha-D-glucosamine = N(4)-{beta-D-GlcNAc-(1-&gt;2)-[beta-D-GlcNAc-(1-&gt;4)]-alpha-D-Man-(1-&gt;3)-[beta-D-GlcNAc-(1-&gt;2)-alpha-D-Man-(1-&gt;6)]-beta-D-Man-(1-&gt;4)-beta-D-GlcNAc-(1-&gt;4)-beta-D-GlcNAc}-L-asparaginyl-[protein] + UDP + H(+). The enzyme catalyses an N(4)-{beta-D-GlcNAc-(1-&gt;2)-alpha-D-Man-(1-&gt;3)-[alpha-D-Man-(1-&gt;6)]-beta-D-Man-(1-&gt;4)-beta-D-GlcNAc-(1-&gt;4)-beta-D-GlcNAc}-L-asparaginyl-[protein] + UDP-N-acetyl-alpha-D-glucosamine = an N(4)-{beta-D-GlcNAc-(1-&gt;2)-[beta-D-GlcNAc-(1-&gt;4)]-alpha-D-Man-(1-&gt;3)-[alpha-D-Man-(1-&gt;6)]-beta-D-Man-(1-&gt;4)-beta-D-GlcNAc-(1-&gt;4)-beta-D-GlcNAc}-L-asparaginyl-[protein] + UDP + H(+). It carries out the reaction an N(4)-{beta-D-GlcNAc-(1-&gt;2)-alpha-D-Man-(1-&gt;3)-[beta-D-GlcNAc-(1-&gt;2)-[beta-D-GlcNAc-(1-&gt;6)]-alpha-D-Man-(1-&gt;6)]-beta-D-Man-(1-&gt;4)-beta-D-GlcNAc-(1-&gt;4)-beta-D-GlcNAc}-L-asparaginyl-[protein] + UDP-N-acetyl-alpha-D-glucosamine = an N(4)-{beta-D-GlcNAc-(1-&gt;2)-[beta-D-GlcNAc-(1-&gt;4)]-alpha-D-Man-(1-&gt;3)-[beta-D-GlcNAc-(1-&gt;2)-[beta-D-GlcNAc-(1-&gt;6)]-alpha-D-Man-(1-&gt;6)]-beta-D-Man-(1-&gt;4)-beta-D-GlcNAc-(1-&gt;4)-beta-D-GlcNAc}-L-asparaginyl-[protein] + UDP + H(+). The catalysed reaction is an N(4)-{beta-D-GlcNAc-(1-&gt;2)-alpha-D-Man-(1-&gt;3)-[beta-D-GlcNAc-(1-&gt;2)-alpha-D-Man-(1-&gt;6)]-beta-D-Man-(1-&gt;4)-beta-D-GlcNAc-(1-&gt;4)-[alpha-L-Fuc-(1-&gt;6)]-beta-D-GlcNAc}-L-asparaginyl-[protein] + UDP-N-acetyl-alpha-D-glucosamine = N(4)-{beta-D-GlcNAc-(1-&gt;2)-[beta-D-GlcNAc-(1-&gt;4)]-alpha-D-Man-(1-&gt;3)-[beta-D-GlcNAc-(1-&gt;2)-alpha-D-Man-(1-&gt;6)]-beta-D-Man-(1-&gt;4)-beta-D-GlcNAc-(1-&gt;4)-[alpha-L-Fuc-(1-&gt;6)]-beta-D-GlcNAc}-asparaginyl-[protein] + UDP + H(+). It catalyses the reaction an N(4)-{beta-D-GlcNAc-(1-&gt;2)-alpha-D-Man-(1-&gt;3)-[beta-D-Gal-(1-&gt;4)-beta-D-GlcNAc-(1-&gt;2)-alpha-D-Man-(1-&gt;6)]-beta-D-Man-(1-&gt;4)-beta-D-GlcNAc-(1-&gt;4)-beta-D-GlcNAc}-L-asparaginyl-[protein] + UDP-N-acetyl-alpha-D-glucosamine = an N(4)-{beta-D-GlcNAc-(1-&gt;2)-[beta-D-GlcNAc-(1-&gt;4)]-alpha-D-Man-(1-&gt;3)-[beta-D-Gal-(1-&gt;4)-beta-D-GlcNAc-(1-&gt;2)-alpha-D-Man-(1-&gt;6)]-beta-D-Man-(1-&gt;4)-beta-D-GlcNAc-(1-&gt;4)-beta-D-GlcNAc}-L-asparaginyl-[protein] + UDP + H(+). The enzyme catalyses N(4)-{beta-D-GlcNAc-(1-&gt;2)-alpha-D-Man-(1-&gt;3)-[alpha-D-Man-(1-&gt;3)-{alpha-D-Man-(1-&gt;6)}-alpha-D-Man-(1-&gt;6)]-beta-D-Man-(1-&gt;4)-beta-D-GlcNAc-(1-&gt;4)-beta-D-GlcNAc}-asparaginyl-[protein] + UDP-N-acetyl-alpha-D-glucosamine = N(4)-{beta-D-GlcNAc-(1-&gt;2)-[beta-D-GlcNAc-(1-&gt;4)]-alpha-D-Man-(1-&gt;3)-[alpha-D-Man-(1-&gt;3)-{alpha-D-Man-(1-&gt;6)}-alpha-D-Man-(1-&gt;6)]-beta-D-Man-(1-&gt;4)-beta-D-GlcNAc-(1-&gt;4)-beta-D-GlcNAc}-asparaginyl-[protein] + UDP + H(+). It carries out the reaction N(4)-{beta-D-GlcNAc-(1-&gt;2)-alpha-D-Man-(1-&gt;3)-beta-D-Man-(1-&gt;4)-beta-D-GlcNAc-(1-&gt;4)-beta-D-GlcNAc}-asparaginyl-[protein] + UDP-N-acetyl-alpha-D-glucosamine = N(4)-{beta-D-GlcNAc-(1-&gt;2)-[beta-D-GlcNAc-(1-&gt;4)]-alpha-D-Man-(1-&gt;3)-beta-D-Man-(1-&gt;4)-beta-D-GlcNAc-(1-&gt;4)-beta-D-GlcNAc}-asparaginyl-[protein] + UDP + H(+). It functions in the pathway protein modification; protein glycosylation. Inhibited by UDP. Its function is as follows. Glycosyltransferase that catalyze the transfer of GlcNAc from UDP-GlcNAc to the GlcNAcbeta1-2Manalpha1-3 arm of the core structure of N-linked glycans through a beta1-4 linkage and participates in the production of tri- and tetra-antennary N-linked sugar chains. Involved in glucose transport by mediating SLC2A2/GLUT2 glycosylation, thereby controlling cell-surface expression of SLC2A2 in pancreatic beta cells. The chain is Alpha-1,3-mannosyl-glycoprotein 4-beta-N-acetylglucosaminyltransferase A from Gallus gallus (Chicken).